Consider the following 1486-residue polypeptide: Chromosome partition protein MukB (1486 aa).

34-41 (GGNGAGKS) is a binding site for ATP. Coiled coils occupy residues 326-418 (LEAD…QYNQ), 444-480 (LETF…QAYQ), and 509-603 (RHLA…RAPV). The interval 666 to 783 (PGGSEDQRLN…EVPLFGRAAR (118 aa)) is flexible hinge. Coiled coils occupy residues 835-923 (EAEI…AKLE), 977-1115 (EMLS…TAKA), and 1209-1266 (VEAI…QNVS).

The protein belongs to the SMC family. MukB subfamily. Homodimerization via its hinge domain. Binds to DNA via its C-terminal region. Interacts, and probably forms a ternary complex, with MukE and MukF via its C-terminal region. The complex formation is stimulated by calcium or magnesium. Interacts with tubulin-related protein FtsZ.

Its subcellular location is the cytoplasm. The protein resides in the nucleoid. Functionally, plays a central role in chromosome condensation, segregation and cell cycle progression. Functions as a homodimer, which is essential for chromosome partition. Involved in negative DNA supercoiling in vivo, and by this means organize and compact chromosomes. May achieve or facilitate chromosome segregation by condensation DNA from both sides of a centrally located replisome during cell division. The polypeptide is Chromosome partition protein MukB (Shigella boydii serotype 4 (strain Sb227)).